A 203-amino-acid chain; its full sequence is MLSYLCFGCFLVSASLEIACGTPIKETSKADAGGGAGIAILGVLAKVGVEAALQQIDNIWKGDVVRYWKCAVENRSDKTLYAYGTTSESGSMGTVFADIPSGSTGIFVWEKSRGAATGASGVVHYRYGDKILNLMASIPYDWNLYQSWANARVSNEKESFYNLYNGLNGAKPATRGGNWGDVDGAKFFLTEKSHAEFKVIFSG.

Positions 1–21 (MLSYLCFGCFLVSASLEIACG) are cleaved as a signal peptide. Residues 175 to 177 (RGG) carry the Cell attachment site motif.

It belongs to the actinoporin family. HALT subfamily. As to quaternary structure, octamer or nonamer in membranes. Monomer in the soluble state. In vitro, interacts with folate receptor alpha (of target organism). As to expression, strongly expressed in the gland and mucous cells in the endoderm.

Its subcellular location is the nematocyst. The protein localises to the secreted. It localises to the target cell membrane. Its function is as follows. Pore-forming protein that forms hydrophilic pores and causes cytolysis. Compared to equinatoxin-2 (AC P61914), it reveals lower cytolysis activity (5-12-fold difference, tested on erythrocytes), a larger pore size (probably 2-3 nm) and different affinity to membrane lipids (100-fold lower affinity to sphingomyelin). Binds to sulfatides (SFT). Shows cytolytic activity on HeLa cells, with a different potency than its paralogs (from most potent to less potent: HALT-4&gt;HALT-6~HALT-1&gt;HALT-3&gt;HALT-7&gt;HALT-2). Pore formation is a multi-step process that involves specific recognition of membrane lipid by a protein aromatic residues rich region, firm binding to the membrane (mainly driven by hydrophobic interactions) accompanied by the transfer of the N-terminal region to the lipid-water interface and finally pore formation after oligomerization of monomers. In vitro, binds to the folate receptor alpha (FOLR1), a GPI-anchored membrane protein that plays a major role in the uptake of folate/folic acid into cells via endocytosis, suggesting a possible involvement of this receptor in the mechanism of HALT-1-induced cell lysis. In vivo, does not cause visible paralysis in larvae of the blowfly Sarcophaga faculata, the most common arthropod prey of Hydra. This Hydra vulgaris (Hydra) protein is Hydra actinoporin-like toxin 2.